A 101-amino-acid polypeptide reads, in one-letter code: Small ribosomal subunit protein uS14 (101 aa).

Belongs to the universal ribosomal protein uS14 family. In terms of assembly, part of the 30S ribosomal subunit. Contacts proteins S3 and S10.

In terms of biological role, binds 16S rRNA, required for the assembly of 30S particles and may also be responsible for determining the conformation of the 16S rRNA at the A site. The chain is Small ribosomal subunit protein uS14 from Pseudoalteromonas translucida (strain TAC 125).